Consider the following 245-residue polypeptide: tRNA1(Val) (adenine(37)-N6)-methyltransferase (245 aa).

It belongs to the methyltransferase superfamily. tRNA (adenine-N(6)-)-methyltransferase family.

Its subcellular location is the cytoplasm. The catalysed reaction is adenosine(37) in tRNA1(Val) + S-adenosyl-L-methionine = N(6)-methyladenosine(37) in tRNA1(Val) + S-adenosyl-L-homocysteine + H(+). Specifically methylates the adenine in position 37 of tRNA(1)(Val) (anticodon cmo5UAC). The sequence is that of tRNA1(Val) (adenine(37)-N6)-methyltransferase from Escherichia coli (strain UTI89 / UPEC).